The following is a 410-amino-acid chain: Lipid droplet-regulating VLDL assembly factor AUP1 (410 aa).

Residue methionine 1 is modified to N-acetylmethionine. Residues 1-20 (MEPPPAPGPERLFDSHRLPS) lie on the Cytoplasmic side of the membrane. An intramembrane segment occupies 21-41 (DGFLLLALLLYAPVGLCLLVL). The Cytoplasmic segment spans residues 42-410 (RLFLGLHVFL…FRERQAQEAE (369 aa)). The interval 259–293 (LTPADKAEHMKRQRHPRLRPQSVQSSFPSPPSPSS) is disordered. Serine 292 bears the Phosphoserine mark. One can recognise a CUE domain in the interval 296-338 (QLTILAQRVKEVLPHVPLNVIQRDLARTGCVDLTITNLLEGAV). The disordered stretch occupies residues 348-367 (GSQSLPTASAPKFPSSGLVT). Serine 363 carries the phosphoserine modification. Phosphothreonine is present on threonine 367.

This sequence belongs to the AUP1 family. In terms of assembly, identified in a complex that contains SEL1L, OS9, FAF2/UBXD8, UBE2J1/UBC6E and AUP1. Interacts with the cytoplasmic tail of ITGA2B, ITGA1, ITGA2, ITGA5, ITGAV and ITGAM. Interacts (via C-terminus) with UBE2G2; the interaction recruits UBE2G2 to lipid droplets. Interacts with ubiquitin ligases AMFR/gp78 and RNF139/TRC8; this promotes interaction of UBE2G2 with AMFR and RNF139. Interacts with apolipoprotein APOB. Post-translationally, monoubiquitinated and diubiquitinated.

Its subcellular location is the endoplasmic reticulum membrane. The protein resides in the lipid droplet. Plays a role in the translocation of terminally misfolded proteins from the endoplasmic reticulum lumen to the cytoplasm and their degradation by the proteasome. Plays a role in lipid droplet formation. Induces lipid droplet clustering. Recruits ubiquitin-conjugating enzyme UBE2G2 to lipid droplets which facilitates its interaction with ubiquitin ligases AMFR/gp78 and RNF139/TRC8, leading to sterol-induced ubiquitination of HMGCR and its subsequent proteasomal degradation. Also required for the degradation of INSIG1, SREBF1 and SREBF2. Plays a role in regulating assembly and secretion of very low density lipoprotein particles and stability of apolipoprotein APOB. This is Lipid droplet-regulating VLDL assembly factor AUP1 from Rattus norvegicus (Rat).